The primary structure comprises 282 residues: Anamorsin homolog (282 aa).

The segment at 5–151 (VDTNNFVLLL…EVGAKTALSL (147 aa)) is N-terminal SAM-like domain. Residues 152–196 (SFAPKPAQPKAETSAAQIWTLSAQDIDDEDVDLLDSDTLLDEDDL) form a linker region. Residues Cys-208, Cys-218, Cys-221, and Cys-223 each coordinate [2Fe-2S] cluster. A fe-S binding site A region spans residues 208 to 223 (CGPGSGKKKACKNCTC). Residues Cys-243, Cys-246, Cys-254, and Cys-257 each coordinate [4Fe-4S] cluster. 2 consecutive short sequence motifs (cx2C motif) follow at residues 243 to 246 (CGSC) and 254 to 257 (CSTC). The tract at residues 243–257 (CGSCYLGDAFRCSTC) is fe-S binding site B.

It belongs to the anamorsin family. As to quaternary structure, monomer. Requires [2Fe-2S] cluster as cofactor. [4Fe-4S] cluster is required as a cofactor.

Its subcellular location is the cytoplasm. The protein resides in the mitochondrion intermembrane space. In terms of biological role, component of the cytosolic iron-sulfur (Fe-S) protein assembly (CIA) machinery. Required for the maturation of extramitochondrial Fe-S proteins. Part of an electron transfer chain functioning in an early step of cytosolic Fe-S biogenesis, facilitating the de novo assembly of a [4Fe-4S] cluster on the cytosolic Fe-S scaffold complex. Electrons are transferred from NADPH via a FAD- and FMN-containing diflavin oxidoreductase. Together with the diflavin oxidoreductase, also required for the assembly of the diferric tyrosyl radical cofactor of ribonucleotide reductase (RNR), probably by providing electrons for reduction during radical cofactor maturation in the catalytic small subunit. In Nematostella vectensis (Starlet sea anemone), this protein is Anamorsin homolog.